Reading from the N-terminus, the 114-residue chain is Small ribosomal subunit protein uS15 (114 aa).

It belongs to the universal ribosomal protein uS15 family.

The chain is Small ribosomal subunit protein uS15 (RpS13) from Musca domestica (House fly).